Here is a 138-residue protein sequence, read N- to C-terminus: Basic phospholipase A2 homolog Ts-K49a (138 aa).

Residues 1–16 (MRTLWIMAVLLLGVEG) form the signal peptide. 7 disulfide bridges follow: Cys-42–Cys-131, Cys-44–Cys-60, Cys-59–Cys-111, Cys-65–Cys-138, Cys-66–Cys-104, Cys-73–Cys-97, and Cys-91–Cys-102. Residues 121-133 (KKKKINLKLFCKK) form an important for membrane-damaging activities in eukaryotes and bacteria; heparin-binding region.

Expressed by the venom gland.

Its subcellular location is the secreted. Its function is as follows. Snake venom phospholipase A2 homolog that lacks catalytic activity. It shows myotoxic and weak anticoagulant activities and induces local edema a few hours after injection (5-10 ug) in the hind paw. A model of myotoxic mechanism has been proposed: an apo Lys49-PLA2 is activated by the entrance of a hydrophobic molecule (e.g. fatty acid) at the hydrophobic channel of the protein leading to a reorientation of a monomer. This reorientation causes a transition between 'inactive' to 'active' states, causing alignment of C-terminal and membrane-docking sites (MDoS) side-by-side and putting the membrane-disruption sites (MDiS) in the same plane, exposed to solvent and in a symmetric position for both monomers. The MDoS region stabilizes the toxin on membrane by the interaction of charged residues with phospholipid head groups. Subsequently, the MDiS region destabilizes the membrane with penetration of hydrophobic residues. This insertion causes a disorganization of the membrane, allowing an uncontrolled influx of ions (i.e. calcium and sodium), and eventually triggering irreversible intracellular alterations and cell death. The protein is Basic phospholipase A2 homolog Ts-K49a of Trimeresurus stejnegeri (Chinese green tree viper).